The sequence spans 389 residues: uncharacterized protein (389 aa).

The first 29 residues, 1–29 (MQPSFTPSGGKWLSIAVILLVIGLVVGFA), serve as a signal peptide directing secretion.

Belongs to the bacterial solute-binding protein 1 family. WtpA subfamily.

This is an uncharacterized protein from Thermoplasma volcanium (strain ATCC 51530 / DSM 4299 / JCM 9571 / NBRC 15438 / GSS1).